The following is a 448-amino-acid chain: Glutamyl-tRNA reductase (448 aa).

Residues 49-52 (TCNR), S109, 114-116 (ETQ), and Q120 each bind substrate. The active-site Nucleophile is C50. NADP(+) is bound at residue 189-194 (GAGEMS).

This sequence belongs to the glutamyl-tRNA reductase family. As to quaternary structure, homodimer.

It carries out the reaction (S)-4-amino-5-oxopentanoate + tRNA(Glu) + NADP(+) = L-glutamyl-tRNA(Glu) + NADPH + H(+). It participates in porphyrin-containing compound metabolism; protoporphyrin-IX biosynthesis; 5-aminolevulinate from L-glutamyl-tRNA(Glu): step 1/2. Its function is as follows. Catalyzes the NADPH-dependent reduction of glutamyl-tRNA(Glu) to glutamate 1-semialdehyde (GSA). The polypeptide is Glutamyl-tRNA reductase (Staphylococcus haemolyticus (strain JCSC1435)).